A 29-amino-acid polypeptide reads, in one-letter code: Toxin TdII-3 (29 aa).

Residues 1 to 29 enclose the LCN-type CS-alpha/beta domain; sequence KDGYLVGTDGCKYGCFTRPGHFCANEECL.

It belongs to the long (4 C-C) scorpion toxin superfamily. Sodium channel inhibitor family. Beta subfamily. As to expression, expressed by the venom gland.

It localises to the secreted. Binds voltage-independently to sodium channels (Nav) and shifts the voltage of activation toward more negative potentials. This toxin is active against mammals and also affects neuromuscular preparations of frog. This is Toxin TdII-3 from Tityus discrepans (Venezuelan scorpion).